The primary structure comprises 547 residues: Chaperonin GroEL 1 (547 aa).

ATP is bound by residues 30-33 (TLGP), Lys-51, 87-91 (DGTTT), Gly-415, and Asp-496.

Belongs to the chaperonin (HSP60) family. Forms a cylinder of 14 subunits composed of two heptameric rings stacked back-to-back. Interacts with the co-chaperonin GroES.

It is found in the cytoplasm. It carries out the reaction ATP + H2O + a folded polypeptide = ADP + phosphate + an unfolded polypeptide.. Functionally, together with its co-chaperonin GroES, plays an essential role in assisting protein folding. The GroEL-GroES system forms a nano-cage that allows encapsulation of the non-native substrate proteins and provides a physical environment optimized to promote and accelerate protein folding. This chain is Chaperonin GroEL 1, found in Bradyrhizobium sp. (strain BTAi1 / ATCC BAA-1182).